Reading from the N-terminus, the 53-residue chain is MAPEENGTCEPCKTFGQKCSHVVKKQRAKFYILRRCIAMLVCWHDQNHDRKDS.

N6 carries N-linked (GlcNAc...) asparagine glycosylation. The required for DVL/RTFL small polypeptide activity stretch occupies residues T14–D45. Residues F30–Q46 traverse the membrane as a helical segment.

This sequence belongs to the DVL/RTFL small polypeptides family. Mostly expressed in stems, flower buds, flowers and seedling shoots, to a lesser extent, in roots and young cauline leaves, but not in mature rosette leaves. Barely observed in cotyledons and leaf primordia.

It localises to the cell membrane. In terms of biological role, small polypeptide acting as a regulatory molecule which coordinates cellular responses required for differentiation, growth and development, probably by restricting polar cell proliferation in lateral organs (e.g. leaves) and coordinating socket cell recruitment and differentiation at trichome sites. Regulates the positional cue and cell proliferation along the body axis. The polypeptide is Small polypeptide DEVIL 16 (Arabidopsis thaliana (Mouse-ear cress)).